The primary structure comprises 211 residues: PDR1 up-regulated protein 1 (211 aa).

A run of 2 helical transmembrane segments spans residues 45–67 (ISKA…PYAY) and 82–99 (RTIL…NVAA).

The protein belongs to the PUP1 family.

It localises to the mitochondrion membrane. Functionally, mitochondrial protein that contributes to the enhanced virulence of C.glabrata strains that acquired azole resistance. The protein is PDR1 up-regulated protein 1 of Candida glabrata (strain ATCC 2001 / BCRC 20586 / JCM 3761 / NBRC 0622 / NRRL Y-65 / CBS 138) (Yeast).